Here is a 551-residue protein sequence, read N- to C-terminus: Protein GZF3 (551 aa).

Residues 17–43 (DNVFEPKSSENLNSLNQSEEEGHIGRW) are disordered. The GATA-type zinc finger occupies 131-155 (CKNCLTSTTPLWRRDEHGAMLCNAC). Disordered regions lie at residues 212 to 260 (GRKA…SATK), 379 to 400 (LAPT…QIRS), and 467 to 490 (SISN…AKDL). Over residues 228–239 (SQLLMGTSSTAK) the composition is skewed to polar residues. Over residues 244–254 (PKTESKERSDS) the composition is skewed to basic and acidic residues. Residues 388-400 (DSNPSEVPNQIRS) show a composition bias toward polar residues. Residues 467-477 (SISNSVSSSDV) are compositionally biased toward low complexity. The segment covering 478-490 (SGRKFENHPAKDL) has biased composition (basic and acidic residues).

The protein resides in the nucleus. In Saccharomyces cerevisiae (strain ATCC 204508 / S288c) (Baker's yeast), this protein is Protein GZF3 (GZF3).